The following is a 237-amino-acid chain: Ribonuclease PH (237 aa).

Phosphate is bound by residues Arg-86 and 124–126 (GTR).

The protein belongs to the RNase PH family. As to quaternary structure, homohexameric ring arranged as a trimer of dimers.

The enzyme catalyses tRNA(n+1) + phosphate = tRNA(n) + a ribonucleoside 5'-diphosphate. In terms of biological role, phosphorolytic 3'-5' exoribonuclease that plays an important role in tRNA 3'-end maturation. Removes nucleotide residues following the 3'-CCA terminus of tRNAs; can also add nucleotides to the ends of RNA molecules by using nucleoside diphosphates as substrates, but this may not be physiologically important. Probably plays a role in initiation of 16S rRNA degradation (leading to ribosome degradation) during starvation. The chain is Ribonuclease PH from Pseudoalteromonas translucida (strain TAC 125).